We begin with the raw amino-acid sequence, 379 residues long: Chaperone protein DnaJ (379 aa).

Positions 5–70 constitute a J domain; that stretch reads DYYETLEVSQ…QKRAAYDQYG (66 aa). Residues 135-213 form a CR-type zinc finger; the sequence is GKSLEIKVPT…CRGQGRVEKT (79 aa). Cys-148, Cys-151, Cys-165, Cys-168, Cys-187, Cys-190, Cys-201, and Cys-204 together coordinate Zn(2+). CXXCXGXG motif repeat units follow at residues 148–155, 165–172, 187–194, and 201–208; these read CEPCDGSG, CSTCHGHG, CPTCSGKG, and CTSCRGQG.

This sequence belongs to the DnaJ family. As to quaternary structure, homodimer. Requires Zn(2+) as cofactor.

It localises to the cytoplasm. In terms of biological role, participates actively in the response to hyperosmotic and heat shock by preventing the aggregation of stress-denatured proteins and by disaggregating proteins, also in an autonomous, DnaK-independent fashion. Unfolded proteins bind initially to DnaJ; upon interaction with the DnaJ-bound protein, DnaK hydrolyzes its bound ATP, resulting in the formation of a stable complex. GrpE releases ADP from DnaK; ATP binding to DnaK triggers the release of the substrate protein, thus completing the reaction cycle. Several rounds of ATP-dependent interactions between DnaJ, DnaK and GrpE are required for fully efficient folding. Also involved, together with DnaK and GrpE, in the DNA replication of plasmids through activation of initiation proteins. The protein is Chaperone protein DnaJ of Colwellia maris.